The primary structure comprises 163 residues: Protein-export protein SecB (163 aa).

The protein belongs to the SecB family. As to quaternary structure, homotetramer, a dimer of dimers. One homotetramer interacts with 1 SecA dimer.

It is found in the cytoplasm. Functionally, one of the proteins required for the normal export of preproteins out of the cell cytoplasm. It is a molecular chaperone that binds to a subset of precursor proteins, maintaining them in a translocation-competent state. It also specifically binds to its receptor SecA. This Brucella abortus (strain S19) protein is Protein-export protein SecB.